The chain runs to 358 residues: Probable butyrate kinase (358 aa).

The protein belongs to the acetokinase family.

It localises to the cytoplasm. It carries out the reaction butanoate + ATP = butanoyl phosphate + ADP. The protein is Probable butyrate kinase of Oceanobacillus iheyensis (strain DSM 14371 / CIP 107618 / JCM 11309 / KCTC 3954 / HTE831).